The chain runs to 552 residues: Glutamine-dependent NAD(+) synthetase (552 aa).

A CN hydrolase domain is found at 11-253 (LRIAMAQFDF…DQWLVVDYAA (243 aa)). Glu-52 functions as the Proton acceptor; for glutaminase activity in the catalytic mechanism. Lys-119 (for glutaminase activity) is an active-site residue. Tyr-125 provides a ligand contact to L-glutamine. Cys-157 acts as the Nucleophile; for glutaminase activity in catalysis. L-glutamine is bound by residues Ser-183 and Lys-189. Residues 275-552 (AWRAVVRGLK…YPITNGYSGQ (278 aa)) are ligase. 298-305 (GLSGGIDS) provides a ligand contact to ATP. A deamido-NAD(+)-binding site is contributed by Asn-381. Thr-405 contributes to the ATP binding site. Positions 410 and 522 each coordinate deamido-NAD(+).

This sequence in the C-terminal section; belongs to the NAD synthetase family.

It catalyses the reaction deamido-NAD(+) + L-glutamine + ATP + H2O = L-glutamate + AMP + diphosphate + NAD(+) + H(+). Its pathway is cofactor biosynthesis; NAD(+) biosynthesis; NAD(+) from deamido-NAD(+) (L-Gln route): step 1/1. In terms of biological role, catalyzes the ATP-dependent amidation of deamido-NAD to form NAD. Uses L-glutamine as a nitrogen source. This is Glutamine-dependent NAD(+) synthetase from Xanthomonas campestris pv. campestris (strain 8004).